Here is a 329-residue protein sequence, read N- to C-terminus: NADH-quinone oxidoreductase subunit H (329 aa).

Helical transmembrane passes span 11–31 (IVVA…CGAL), 81–101 (LIFT…FAVV), 114–134 (IGLL…LFAG), 154–174 (ISYE…TGSF), 187–207 (TWFI…GVAV), 238–258 (FFVG…TLFF), 270–290 (QLSF…FILL), and 309–329 (FCLP…LAAQ).

This sequence belongs to the complex I subunit 1 family. NDH-1 is composed of 13 different subunits. Subunits NuoA, H, J, K, L, M, N constitute the membrane sector of the complex.

It is found in the cell inner membrane. It catalyses the reaction a quinone + NADH + 5 H(+)(in) = a quinol + NAD(+) + 4 H(+)(out). Functionally, NDH-1 shuttles electrons from NADH, via FMN and iron-sulfur (Fe-S) centers, to quinones in the respiratory chain. The immediate electron acceptor for the enzyme in this species is believed to be ubiquinone. Couples the redox reaction to proton translocation (for every two electrons transferred, four hydrogen ions are translocated across the cytoplasmic membrane), and thus conserves the redox energy in a proton gradient. This subunit may bind ubiquinone. In Azotobacter vinelandii (strain DJ / ATCC BAA-1303), this protein is NADH-quinone oxidoreductase subunit H.